The following is a 278-amino-acid chain: MLTTTKVFFLLLTTWITWYAIVNPQSRAAPTLETIASLDLNNPTTYLSFITNIRTKVADKTEQCTIQKISKTFTQRYSYIDLIVSSTQKITLAIDMADLYVLGYSDIANNKGRAFFFKDVTEAVANNFFPGATGTNRIKLTFTGSYGDLEKNGGLRKDNPLGIFRLENSIVNIYGKAGDVKKQAKFFLLAIQMVSEAARFKYISDKIPSEKYEEVTVDEYMTALENNWAKLSTAVYNSKPSTTTATKCQLATSPVTISPWIFKTVEEIKLVMGLLKSS.

The signal sequence occupies residues 1–28 (MLTTTKVFFLLLTTWITWYAIVNPQSRA). A disulfide bridge connects residues Cys64 and Cys248. The active site involves Glu196.

It catalyses the reaction Endohydrolysis of the N-glycosidic bond at one specific adenosine on the 28S rRNA.. Its function is as follows. Inhibits viral infection of plants, and protein synthesis in vitro. This Mirabilis jalapa (Garden four-o'clock) protein is Antiviral protein MAP.